The following is a 76-amino-acid chain: Large ribosomal subunit protein eL20 (76 aa).

It belongs to the eukaryotic ribosomal protein eL20 family. Part of the 50S ribosomal subunit. Binds 23S rRNA.

The chain is Large ribosomal subunit protein eL20 from Methanococcus maripaludis (strain C6 / ATCC BAA-1332).